The following is a 329-amino-acid chain: Olfactory receptor 10J3 (329 aa).

At 1-26 the chain is on the extracellular side; that stretch reads MPKLNSTFVTEFLFEGFSSFRRQHKL. N-linked (GlcNAc...) asparagine glycosylation occurs at Asn5. Residues 27–47 traverse the membrane as a helical segment; that stretch reads VFFVVFLTLYLLTLSGNVIIM. At 48-55 the chain is on the cytoplasmic side; that stretch reads TIIRLDHH. The chain crosses the membrane as a helical span at residues 56–76; that stretch reads LHTPMYFFLCMLSISETCYTV. Over 77–100 the chain is Extracellular; sequence AIIPHMLSGLLNPHQPIATQSCAT. A disulfide bridge connects residues Cys98 and Cys190. Residues 101–121 traverse the membrane as a helical segment; it reads QLFFYLTFGINNCFLLTVMGY. Topologically, residues 122 to 140 are cytoplasmic; it reads DRYVAICNPLRYSVIMGKR. The helical transmembrane segment at 141 to 161 threads the bilayer; sequence ACIQLASGSLGIGLGMAIVQV. At 162–198 the chain is on the extracellular side; the sequence is TSVFGLPFCDAFVISHFFCDVRHLLKLACTDTTVNEI. A helical transmembrane segment spans residues 199 to 218; it reads INFVVSVCVLVLPMGLVFIS. The Cytoplasmic segment spans residues 219–238; sequence YVLIISTILKIASAEGQKKA. Residues 239 to 259 form a helical membrane-spanning segment; that stretch reads FATCASHLTVVIIHYGCASII. Residues 260–272 are Extracellular-facing; it reads YLKPKSQSSLGQD. The helical transmembrane segment at 273–293 threads the bilayer; the sequence is RLISVTYTHHSPTEPCCVQPE. The Cytoplasmic portion of the chain corresponds to 294–329; the sequence is EQGGQRCSAQSRGAKNSVSLMKRGCEGFSFAFINMY.

This sequence belongs to the G-protein coupled receptor 1 family.

It is found in the cell membrane. Its function is as follows. Odorant receptor. This chain is Olfactory receptor 10J3 (OR10J3), found in Homo sapiens (Human).